A 663-amino-acid chain; its full sequence is UvrABC system protein B (663 aa).

Residues 26–414 form the Helicase ATP-binding domain; it reads DGLESGLAKQ…DNVAEQVVRP (389 aa). 39–46 provides a ligand contact to ATP; it reads GVTGSGKT. Positions 92 to 115 match the Beta-hairpin motif; that stretch reads YYDYYQPEAYVPASDTFIEKDASI. Positions 430–596 constitute a Helicase C-terminal domain; it reads QVDDLMSEIR…GINKSVEDIL (167 aa). In terms of domain architecture, UVR spans 624 to 659; that stretch reads AKEINALEKQMYAHAQNMEFELAAKIRDEYLLLKEQ.

The protein belongs to the UvrB family. As to quaternary structure, forms a heterotetramer with UvrA during the search for lesions. Interacts with UvrC in an incision complex.

The protein resides in the cytoplasm. In terms of biological role, the UvrABC repair system catalyzes the recognition and processing of DNA lesions. A damage recognition complex composed of 2 UvrA and 2 UvrB subunits scans DNA for abnormalities. Upon binding of the UvrA(2)B(2) complex to a putative damaged site, the DNA wraps around one UvrB monomer. DNA wrap is dependent on ATP binding by UvrB and probably causes local melting of the DNA helix, facilitating insertion of UvrB beta-hairpin between the DNA strands. Then UvrB probes one DNA strand for the presence of a lesion. If a lesion is found the UvrA subunits dissociate and the UvrB-DNA preincision complex is formed. This complex is subsequently bound by UvrC and the second UvrB is released. If no lesion is found, the DNA wraps around the other UvrB subunit that will check the other stand for damage. In Legionella pneumophila (strain Paris), this protein is UvrABC system protein B.